A 449-amino-acid polypeptide reads, in one-letter code: Tubulin alpha-1C chain (449 aa).

An MREC motif motif is present at residues 1-4; sequence MREC. Q11 is a binding site for GTP. N6-acetyllysine is present on K40. GTP-binding residues include E71, S140, G144, T145, T179, N206, and N228. E71 contributes to the Mg(2+) binding site. Residue E254 is part of the active site. Y282 bears the 3'-nitrotyrosine mark. Y432 is subject to Phosphotyrosine. Position 439 is a phosphoserine (S439). Y449 is subject to 3'-nitrotyrosine.

Belongs to the tubulin family. Dimer of alpha and beta chains. A typical microtubule is a hollow water-filled tube with an outer diameter of 25 nm and an inner diameter of 15 nM. Alpha-beta heterodimers associate head-to-tail to form protofilaments running lengthwise along the microtubule wall with the beta-tubulin subunit facing the microtubule plus end conferring a structural polarity. Microtubules usually have 13 protofilaments but different protofilament numbers can be found in some organisms and specialized cells. The cofactor is Mg(2+). Some glutamate residues at the C-terminus are polyglycylated, resulting in polyglycine chains on the gamma-carboxyl group. Glycylation is mainly limited to tubulin incorporated into axonemes (cilia and flagella) whereas glutamylation is prevalent in neuronal cells, centrioles, axonemes, and the mitotic spindle. Both modifications can coexist on the same protein on adjacent residues, and lowering polyglycylation levels increases polyglutamylation, and reciprocally. Cilia and flagella glycylation is required for their stability and maintenance. Flagella glycylation controls sperm motility. Post-translationally, some glutamate residues at the C-terminus are polyglutamylated, resulting in polyglutamate chains on the gamma-carboxyl group. Polyglutamylation plays a key role in microtubule severing by spastin (SPAST). SPAST preferentially recognizes and acts on microtubules decorated with short polyglutamate tails: severing activity by SPAST increases as the number of glutamates per tubulin rises from one to eight, but decreases beyond this glutamylation threshold. Glutamylation is also involved in cilia motility. In terms of processing, acetylation of alpha chains at Lys-40 is located inside the microtubule lumen. This modification has been correlated with increased microtubule stability, intracellular transport and ciliary assembly. Methylation of alpha chains at Lys-40 is found in mitotic microtubules and is required for normal mitosis and cytokinesis contributing to genomic stability. Post-translationally, nitration of Tyr-449 is irreversible and interferes with normal dynein intracellular distribution. In terms of processing, undergoes a tyrosination/detyrosination cycle, the cyclic removal and re-addition of a C-terminal tyrosine residue by the enzymes tubulin tyrosine carboxypeptidase (MATCAP1, VASH1 or VASH2) and tubulin tyrosine ligase (TTL), respectively. Tyrosination promotes microtubule interaction with CAP-Gly domain-containing proteins such as CLIP1, CLIP2 and DCTN1. Tyrosination regulates the initiation of dynein-dynactin motility via interaction with DCTN1, which brings the dynein-dynactin complex into contact with microtubules. In neurons, tyrosinated tubulins mediate the initiation of retrograde vesicle transport. Post-translationally, detyrosination is involved in metaphase plate congression by guiding chromosomes during mitosis: detyrosination promotes interaction with CENPE, promoting pole-proximal transport of chromosomes toward the equator. Detyrosination increases microtubules-dependent mechanotransduction in dystrophic cardiac and skeletal muscle. In cardiomyocytes, detyrosinated microtubules are required to resist to contractile compression during contraction: detyrosination promotes association with desmin (DES) at force-generating sarcomeres, leading to buckled microtubules and mechanical resistance to contraction.

It localises to the cytoplasm. It is found in the cytoskeleton. The catalysed reaction is GTP + H2O = GDP + phosphate + H(+). In terms of biological role, tubulin is the major constituent of microtubules, a cylinder consisting of laterally associated linear protofilaments composed of alpha- and beta-tubulin heterodimers. Microtubules grow by the addition of GTP-tubulin dimers to the microtubule end, where a stabilizing cap forms. Below the cap, tubulin dimers are in GDP-bound state, owing to GTPase activity of alpha-tubulin. In Rattus norvegicus (Rat), this protein is Tubulin alpha-1C chain (Tuba1c).